We begin with the raw amino-acid sequence, 422 residues long: MRVLVIGSGAREHALLLALSRDPQVKGLVVAPGNAGTARLAEQYDVDISSGEDIVALARDVRADMVVIGPELPLVLGVADAVRAAGIVCFGPSKDAARIEGSKAFAKEVMAAAGVRTSRSEIVNSPARLDAALDRFGPPVGDLSWVVKDDRLAAGKGVVVTSDRDVARTHAAGLLEAGHPVLLESYLDGPEVSLFCVVDGRTVLPLLPAQDFKRVGEGDTGPNTGGMGAYAPLPWLPDEVCQQALTSIVEPVAAELVQRGSPFRGLLYVGLAVTASGPAVVEFNCRFGDPETQVVLALLDSPLGQLLYAAGTGSLADFGELHWRSGAAVAVVLAAENYPRRPRVGDIVFGSEIEGVLHAGTTRRDDGVIVSSGGRVLSVVATGDDLSAARSQAYRIIGSIRLLGSHFRKDIGFSAAKGRIHI.

One can recognise an ATP-grasp domain in the interval 107-312 (KEVMAAAGVR…LGQLLYAAGT (206 aa)). 138–193 (PPVGDLSWVVKDDRLAAGKGVVVTSDRDVARTHAAGLLEAGHPVLLESYLDGPEVS) provides a ligand contact to ATP. 2 residues coordinate Mg(2+): glutamate 282 and asparagine 284.

It belongs to the GARS family. Mg(2+) is required as a cofactor. The cofactor is Mn(2+).

The catalysed reaction is 5-phospho-beta-D-ribosylamine + glycine + ATP = N(1)-(5-phospho-beta-D-ribosyl)glycinamide + ADP + phosphate + H(+). Its pathway is purine metabolism; IMP biosynthesis via de novo pathway; N(1)-(5-phospho-D-ribosyl)glycinamide from 5-phospho-alpha-D-ribose 1-diphosphate: step 2/2. The polypeptide is Phosphoribosylamine--glycine ligase (Mycobacterium leprae (strain TN)).